Here is a 515-residue protein sequence, read N- to C-terminus: Acetyltransferase sphE (515 aa).

Residues H184 and D438 each act as proton acceptor in the active site.

This sequence belongs to the plant acyltransferase family. In terms of assembly, monomer.

It catalyses the reaction sphingofungin B + acetyl-CoA = sphingofungin C + CoA. It participates in secondary metabolite biosynthesis. In terms of biological role, acetyltransferase; part of the gene cluster that mediates the biosynthesis of sphingofungins, bioactive molecules acting as sphingolipid inhibitors via inhibiting serine palmitoyl transferase (SPT). Within the pathway, sphE catalyzes the O-acetylation of the C-5 hydroxyl group of sphingofungin B to produce sphingofungin C. SphE can also convert sphingofungin B1 into sphingofungin C1 and sphingofungin B2 into sphingofungin C2. Sphingofungin biosynthesis starts with the PKS sphB that produces an C18 polyketide precursor 3-hydroxyoctadeca-4,10-dienoyl-ACP containing one delta-6 desaturation and one delta-12 desaturation. The aminoacyl transferase sphA uses the sphB product to produce 3-keto-presphingofungin by adding an aminomalonate molecule. SphF then reduces the C-3 ketone of 3-keto-presphingofungin which leads to presphingofungin. The cytochrome P450 monooxygenase sphH converts presphingofungin into sphingofungin B1 which is further converted to sphingofungin B by the dioxygenase sphC. SphC is also able to convert presphingofungin into sphingofungin B2. The acetyltransferase sphE acetylates sphingofungin B to produce sphingofungin C, but can also convert sphingofungin B1 into sphingofungin C1 and sphingofungin B2 into sphingofungin C2. Finally, sphingofungin C can be spontaneously converted into sphingofungin D. The protein is Acetyltransferase sphE of Aspergillus fumigatus (strain CBS 144.89 / FGSC A1163 / CEA10) (Neosartorya fumigata).